The chain runs to 436 residues: UPF0597 protein YhaM (436 aa).

Belongs to the UPF0597 family.

The sequence is that of UPF0597 protein YhaM from Salmonella heidelberg (strain SL476).